We begin with the raw amino-acid sequence, 442 residues long: 4-hydroxyphenylpyruvate dioxygenase (442 aa).

VOC domains are found at residues 45–200 and 216–376; these read RFHH…GFEA and RLDH…IFTK. Residues histidine 219, histidine 301, and glutamate 387 each contribute to the Fe cation site.

It belongs to the 4HPPD family. Fe cation serves as cofactor.

Its subcellular location is the cytoplasm. The catalysed reaction is 3-(4-hydroxyphenyl)pyruvate + O2 = homogentisate + CO2. Its pathway is amino-acid degradation; L-phenylalanine degradation; acetoacetate and fumarate from L-phenylalanine: step 3/6. The protein operates within cofactor biosynthesis; prenylquinone biosynthesis. The polypeptide is 4-hydroxyphenylpyruvate dioxygenase (Daucus carota (Wild carrot)).